Consider the following 108-residue polypeptide: MDIVKVCPELHIVMDVDSGLIAEMRKDILVVDLHPVEDEINKLAQYAKALENSLDPRNTPMKAYAGREGTYKLAGMFQGMFFGFWVTMAVLVLVTILAVKMNLSLIGL.

A helical membrane pass occupies residues 77 to 99 (FQGMFFGFWVTMAVLVLVTILAV).

The protein belongs to the MtrB family. In terms of assembly, the complex is composed of 8 subunits; MtrA, MtrB, MtrC, MtrD, MtrE, MtrF, MtrG and MtrH.

The protein resides in the cell membrane. It catalyses the reaction 5-methyl-5,6,7,8-tetrahydromethanopterin + coenzyme M + 2 Na(+)(in) = 5,6,7,8-tetrahydromethanopterin + methyl-coenzyme M + 2 Na(+)(out). It participates in one-carbon metabolism; methanogenesis from CO(2); methyl-coenzyme M from 5,10-methylene-5,6,7,8-tetrahydromethanopterin: step 2/2. In terms of biological role, part of a complex that catalyzes the formation of methyl-coenzyme M and tetrahydromethanopterin from coenzyme M and methyl-tetrahydromethanopterin. This is an energy-conserving, sodium-ion translocating step. This chain is Tetrahydromethanopterin S-methyltransferase subunit B, found in Methanococcus maripaludis (strain DSM 14266 / JCM 13030 / NBRC 101832 / S2 / LL).